The sequence spans 1050 residues: Toluene efflux pump membrane transporter TtgB (1050 aa).

Helical transmembrane passes span 10–30 (IFAW…ILKL), 339–359 (GVIH…YLFL), 370–390 (MTVP…GFSI), 393–413 (LTMF…IVVV), 440–460 (GALV…AFFG), 472–492 (ITIV…TPAL), 539–559 (VPFL…FARI), 871–891 (MPAL…ALYE), 893–913 (WSIP…ALIA), 923–943 (VYFL…AILI), 972–992 (IIMT…ASGA), and 1004–1024 (VIGG…LFFV).

It belongs to the resistance-nodulation-cell division (RND) (TC 2.A.6) family.

The protein localises to the cell inner membrane. In terms of biological role, the inner membrane transporter component of a constitutive organic solvent efflux system. Involved in export of toluene, styrene, m-xylene, propylbenzene and ethylbenzene. Also exports AMP and the antibiotics carbenicillin, nalidixic acid, chloramphenicol and tetracycline. This Pseudomonas putida (strain DOT-T1E) protein is Toluene efflux pump membrane transporter TtgB (ttgB).